The primary structure comprises 233 residues: Lipoprotein-releasing system ATP-binding protein LolD (233 aa).

In terms of domain architecture, ABC transporter spans 6-233 (LQCDNLCKRY…TAELSLMGAE (228 aa)). 42 to 49 (GSSGSGKS) lines the ATP pocket.

Belongs to the ABC transporter superfamily. Lipoprotein translocase (TC 3.A.1.125) family. As to quaternary structure, the complex is composed of two ATP-binding proteins (LolD) and two transmembrane proteins (LolC and LolE).

The protein resides in the cell inner membrane. Its function is as follows. Part of the ABC transporter complex LolCDE involved in the translocation of mature outer membrane-directed lipoproteins, from the inner membrane to the periplasmic chaperone, LolA. Responsible for the formation of the LolA-lipoprotein complex in an ATP-dependent manner. The polypeptide is Lipoprotein-releasing system ATP-binding protein LolD (Salmonella paratyphi A (strain ATCC 9150 / SARB42)).